The following is a 136-amino-acid chain: Transcription antitermination protein NusB (136 aa).

This sequence belongs to the NusB family.

Involved in transcription antitermination. Required for transcription of ribosomal RNA (rRNA) genes. Binds specifically to the boxA antiterminator sequence of the ribosomal RNA (rrn) operons. The protein is Transcription antitermination protein NusB of Paenarthrobacter aurescens (strain TC1).